A 565-amino-acid polypeptide reads, in one-letter code: Amino-acid acetyltransferase, mitochondrial (565 aa).

The disordered stretch occupies residues 38 to 58 (DIATATPAATPSDGAQPPAQN). The region spanning 352–540 (LPVRVLRSME…EFGGGRLVRV (189 aa)) is the N-acetyltransferase domain.

Belongs to the acetyltransferase family.

Its subcellular location is the mitochondrion. The catalysed reaction is L-glutamate + acetyl-CoA = N-acetyl-L-glutamate + CoA + H(+). It participates in amino-acid biosynthesis; L-arginine biosynthesis; N(2)-acetyl-L-ornithine from L-glutamate: step 1/4. Functionally, N-acetylglutamate synthase involved in arginine biosynthesis. In Cryptococcus neoformans var. neoformans serotype D (strain B-3501A) (Filobasidiella neoformans), this protein is Amino-acid acetyltransferase, mitochondrial (ARG2).